We begin with the raw amino-acid sequence, 214 residues long: Phosphoribosylglycinamide formyltransferase (214 aa).

Residue Gly12 to Asn14 participates in N(1)-(5-phospho-beta-D-ribosyl)glycinamide binding. (6R)-10-formyltetrahydrofolate contacts are provided by residues Leu105 to Leu108 and Asn123. Catalysis depends on His125, which acts as the Proton donor. Asp167 contacts (6R)-10-formyltetrahydrofolate. Glu197 is a binding site for N(1)-(5-phospho-beta-D-ribosyl)glycinamide.

It belongs to the GART family.

The enzyme catalyses N(1)-(5-phospho-beta-D-ribosyl)glycinamide + (6R)-10-formyltetrahydrofolate = N(2)-formyl-N(1)-(5-phospho-beta-D-ribosyl)glycinamide + (6S)-5,6,7,8-tetrahydrofolate + H(+). It participates in purine metabolism; IMP biosynthesis via de novo pathway; N(2)-formyl-N(1)-(5-phospho-D-ribosyl)glycinamide from N(1)-(5-phospho-D-ribosyl)glycinamide (10-formyl THF route): step 1/1. The protein is Phosphoribosylglycinamide formyltransferase of Saccharomyces cerevisiae (strain ATCC 204508 / S288c) (Baker's yeast).